We begin with the raw amino-acid sequence, 491 residues long: Xaa-Pro aminopeptidase 1 (491 aa).

Residues 1–32 form a disordered region; the sequence is MAEELTPENPAIPETPEETEEPIKQRKNGLYP. Asp-308, Asp-320, His-403, Glu-434, and Glu-458 together coordinate Mn(2+).

Belongs to the peptidase M24B family. In terms of assembly, homodimer. It depends on Mn(2+) as a cofactor.

The enzyme catalyses Release of any N-terminal amino acid, including proline, that is linked to proline, even from a dipeptide or tripeptide.. In Streptomyces coelicolor (strain ATCC BAA-471 / A3(2) / M145), this protein is Xaa-Pro aminopeptidase 1 (pepPI).